Reading from the N-terminus, the 274-residue chain is uncharacterized protein (274 aa).

This is an uncharacterized protein from Rhodobacter capsulatus (Rhodopseudomonas capsulata).